The sequence spans 358 residues: MATH domain and coiled-coil domain-containing protein At3g58440 (358 aa).

An MATH domain is found at 8 to 131 (QDKFTWVLEK…NDRLTIVAEV (124 aa)). Residues 250–309 (LRDAGFKVDWLEKKLDQLKEKKEEEMSGLARLHEIEERLQKLKLLFVDLESQLQKEKVEA) are a coiled coil.

This chain is MATH domain and coiled-coil domain-containing protein At3g58440, found in Arabidopsis thaliana (Mouse-ear cress).